The sequence spans 308 residues: L-lactate dehydrogenase 2 (308 aa).

Residues Val14, Asp35, Tyr65, and 79 to 80 contribute to the NAD(+) site; that span reads GA. Arg88 is a binding site for substrate. Position 101 (Ser101) interacts with NAD(+). A substrate-binding site is contributed by 120–123; the sequence is NPVD. Thr143 lines the NAD(+) pocket. 148–151 serves as a coordination point for substrate; sequence DTAR. The active-site Proton acceptor is the His175. Substrate is bound at residue Thr225.

Belongs to the LDH/MDH superfamily. LDH family. Homotetramer.

It localises to the cytoplasm. The enzyme catalyses (S)-lactate + NAD(+) = pyruvate + NADH + H(+). The protein operates within fermentation; pyruvate fermentation to lactate; (S)-lactate from pyruvate: step 1/1. Functionally, catalyzes the conversion of lactate to pyruvate. In Lactobacillus johnsonii (strain CNCM I-12250 / La1 / NCC 533), this protein is L-lactate dehydrogenase 2.